We begin with the raw amino-acid sequence, 246 residues long: Probable transcriptional regulatory protein ORF2U (246 aa).

It belongs to the TACO1 family.

It localises to the cytoplasm. This chain is Probable transcriptional regulatory protein ORF2U, found in Hathewaya histolytica (Clostridium histolyticum).